The primary structure comprises 617 residues: 1-deoxy-D-xylulose-5-phosphate synthase (617 aa).

Residues His-76 and 117–119 (GHS) contribute to the thiamine diphosphate site. Mg(2+) is bound at residue Asp-148. Thiamine diphosphate contacts are provided by residues 149–150 (GA), Asn-177, Tyr-285, and Glu-366. Asn-177 is a binding site for Mg(2+).

Belongs to the transketolase family. DXPS subfamily. In terms of assembly, homodimer. Mg(2+) serves as cofactor. It depends on thiamine diphosphate as a cofactor.

It catalyses the reaction D-glyceraldehyde 3-phosphate + pyruvate + H(+) = 1-deoxy-D-xylulose 5-phosphate + CO2. Its pathway is metabolic intermediate biosynthesis; 1-deoxy-D-xylulose 5-phosphate biosynthesis; 1-deoxy-D-xylulose 5-phosphate from D-glyceraldehyde 3-phosphate and pyruvate: step 1/1. Catalyzes the acyloin condensation reaction between C atoms 2 and 3 of pyruvate and glyceraldehyde 3-phosphate to yield 1-deoxy-D-xylulose-5-phosphate (DXP). This is 1-deoxy-D-xylulose-5-phosphate synthase from Histophilus somni (strain 129Pt) (Haemophilus somnus).